The sequence spans 258 residues: MAASVLNTVLRRLPMLSLFRGSHRVQVPLQTLCTKAPSEEDSLSSVPISPYKDEPWKYLESEEYQERYGSRPVWADYRRNHKGGVPPQRTRKTCIRRNKVVGNPCPICRDHKLHVDFRNVKLLEQFVCAHTGIIFYAPYTGVCVKQHKRLTQAIQKARDHGLLIYHIPQVEPRDLDFSTSHGAVSATPPAPTLVSGDPWYPWYNWKQPPERELSRLRRLYQGHLQEESGPPPESMPKMPPRTPAEASSTGQTGPQSAL.

A mitochondrion-targeting transit peptide spans 1–35 (MAASVLNTVLRRLPMLSLFRGSHRVQVPLQTLCTK). 2 positions are modified to phosphoserine: Ser38 and Ser49. Residues 214-258 (SRLRRLYQGHLQEESGPPPESMPKMPPRTPAEASSTGQTGPQSAL) form a disordered region. Residues 229 to 242 (GPPPESMPKMPPRT) show a composition bias toward pro residues. The span at 245 to 258 (EASSTGQTGPQSAL) shows a compositional bias: polar residues.

It belongs to the bacterial ribosomal protein bS18 family. Mitochondrion-specific ribosomal protein mS40 subfamily. In terms of assembly, component of the mitochondrial small ribosomal subunit (mt-SSU). Mature mammalian 55S mitochondrial ribosomes consist of a small (28S) and a large (39S) subunit. The 28S small subunit contains a 12S ribosomal RNA (12S mt-rRNA) and 30 different proteins. The 39S large subunit contains a 16S rRNA (16S mt-rRNA), a copy of mitochondrial valine transfer RNA (mt-tRNA(Val)), which plays an integral structural role, and 52 different proteins. mS40 has a zinc binding site.

The protein localises to the mitochondrion. The protein is Small ribosomal subunit protein mS40 (MRPS18B) of Homo sapiens (Human).